The chain runs to 309 residues: Sulfate adenylyltransferase subunit 2 (309 aa).

This sequence belongs to the PAPS reductase family. CysD subfamily. Heterodimer composed of CysD, the smaller subunit, and CysN.

The catalysed reaction is sulfate + ATP + H(+) = adenosine 5'-phosphosulfate + diphosphate. It functions in the pathway sulfur metabolism; hydrogen sulfide biosynthesis; sulfite from sulfate: step 1/3. With CysN forms the ATP sulfurylase (ATPS) that catalyzes the adenylation of sulfate producing adenosine 5'-phosphosulfate (APS) and diphosphate, the first enzymatic step in sulfur assimilation pathway. APS synthesis involves the formation of a high-energy phosphoric-sulfuric acid anhydride bond driven by GTP hydrolysis by CysN coupled to ATP hydrolysis by CysD. This chain is Sulfate adenylyltransferase subunit 2, found in Mycobacterium sp. (strain JLS).